The following is a 996-amino-acid chain: Oxysterol-binding protein homolog 3 (996 aa).

Residues 1-183 (METIDIQNRS…KKKILFNASV (183 aa)) are GOLD domain. Positions 75 to 114 (GSSSNIEEHHRRSSQHSHSSSNGSDNKRKERSYSSLSISG) are disordered. Residues serine 190 and serine 193 each carry the phosphoserine modification. Threonine 210 bears the Phosphothreonine mark. The PH domain maps to 221 to 315 (GRYLQGYLLK…WVDALQTCFD (95 aa)). Threonine 323 is subject to Phosphothreonine. Phosphoserine is present on serine 324. Phosphothreonine occurs at positions 325 and 352. The tract at residues 338 to 372 (EVINKSSPQDHDHLTPTATTKSALSHRQHTQKDMD) is disordered. Residues 514–520 (EFFDAEE) carry the FFAT motif. The disordered stretch occupies residues 556 to 611 (KEVQLSGSEQIASSSVESYTTNDENHSRKHLKNRHKNRRRGHPHHQKTKSAQSSTE). Polar residues predominate over residues 558 to 577 (VQLSGSEQIASSSVESYTTN). Over residues 582–603 (SRKHLKNRHKNRRRGHPHHQKT) the composition is skewed to basic residues. Serine 605 bears the Phosphoserine mark. Residues 642 to 982 (SLLSFLRKNV…YITGPKSYWE (341 aa)) are OSBP-related domain (ORD). A 1,2-diacyl-sn-glycero-3-phospho-(1D-myo-inositol 4-phosphate)-binding positions include 657–660 (SIAM), lysine 717, 745–746 (HR), and 945–949 (EQLQR).

This sequence belongs to the OSBP family. Interacts with SCS2.

It localises to the cytoplasm. Its subcellular location is the endoplasmic reticulum membrane. In terms of biological role, lipid transport protein (LTP) involved in non-vesicular transfer of lipids between membranes. Functions in phosphoinositide-coupled directional transport of various lipids by carrying the lipid molecule in a hydrophobic pocket and transferring it between membranes through the cytosol. Involved in maintenance of intracellular sterol distribution and homeostasis. May serve as a sensor of PI4P levels at PM-ER membrane contact site, regulating PI4P phosphatase SAC1 activity. May be involved in ergosterol transport from the plasma membrane (PM) to the ER, however it does not bind sterols directly. Plays a role in the positive regulation of vesicular transport of ceramide from the ER to the Golgi, negatively regulating COPII-mediated ER export of cargos. The chain is Oxysterol-binding protein homolog 3 from Saccharomyces cerevisiae (strain ATCC 204508 / S288c) (Baker's yeast).